The sequence spans 325 residues: Small ribosomal subunit biogenesis GTPase RsgA (325 aa).

The CP-type G domain occupies 80-241; that stretch reads LSKQIHIIAS…IIDTPGIKGF (162 aa). GTP-binding positions include 129 to 132 and 183 to 191; these read NKID and GHSGVGKST. Positions 265, 270, 272, and 278 each coordinate Zn(2+).

It belongs to the TRAFAC class YlqF/YawG GTPase family. RsgA subfamily. As to quaternary structure, monomer. Associates with 30S ribosomal subunit, binds 16S rRNA. Zn(2+) serves as cofactor.

The protein resides in the cytoplasm. Functionally, one of several proteins that assist in the late maturation steps of the functional core of the 30S ribosomal subunit. Helps release RbfA from mature subunits. May play a role in the assembly of ribosomal proteins into the subunit. Circularly permuted GTPase that catalyzes slow GTP hydrolysis, GTPase activity is stimulated by the 30S ribosomal subunit. This chain is Small ribosomal subunit biogenesis GTPase RsgA, found in Flavobacterium johnsoniae (strain ATCC 17061 / DSM 2064 / JCM 8514 / BCRC 14874 / CCUG 350202 / NBRC 14942 / NCIMB 11054 / UW101) (Cytophaga johnsonae).